The primary structure comprises 94 residues: Small ribosomal subunit protein bS18 (94 aa).

It belongs to the bacterial ribosomal protein bS18 family. Part of the 30S ribosomal subunit. Forms a tight heterodimer with protein bS6.

In terms of biological role, binds as a heterodimer with protein bS6 to the central domain of the 16S rRNA, where it helps stabilize the platform of the 30S subunit. In Polaromonas naphthalenivorans (strain CJ2), this protein is Small ribosomal subunit protein bS18.